The primary structure comprises 564 residues: Quinone-dependent D-lactate dehydrogenase (564 aa).

In terms of domain architecture, FAD-binding PCMH-type spans 36 to 207; that stretch reads GTGNALAVVR…TNLQEKRYQV (172 aa). FAD is bound by residues 70–74, 78–79, Gly137, Ser144, Gly154, and Val256; these read AANTG and GS.

The protein belongs to the quinone-dependent D-lactate dehydrogenase family. The cofactor is FAD.

It localises to the cell inner membrane. The catalysed reaction is (R)-lactate + a quinone = a quinol + pyruvate. Functionally, catalyzes the oxidation of D-lactate to pyruvate. In Haemophilus influenzae (strain ATCC 51907 / DSM 11121 / KW20 / Rd), this protein is Quinone-dependent D-lactate dehydrogenase.